A 256-amino-acid polypeptide reads, in one-letter code: Putative cysteine-rich repeat secretory protein 21 (256 aa).

The first 30 residues, 1–30 (MYSSVSKRLVSVHILVVVALQLLFIPNVLS), serve as a signal peptide directing secretion. Gnk2-homologous domains are found at residues 37-139 (YLHH…SIDT) and 145-253 (YQNN…LYPF).

It belongs to the cysteine-rich repeat secretory protein family.

It is found in the secreted. In Arabidopsis thaliana (Mouse-ear cress), this protein is Putative cysteine-rich repeat secretory protein 21 (CRRSP21).